Reading from the N-terminus, the 113-residue chain is U11-theraphotoxin-Hhn1u (113 aa).

The first 21 residues, Met-1–Ala-21, serve as a signal peptide directing secretion. Residues Asp-22–Arg-74 constitute a propeptide that is removed on maturation. 3 disulfide bridges follow: Cys-75–Cys-90, Cys-82–Cys-95, and Cys-89–Cys-110.

This sequence belongs to the neurotoxin 14 (magi-1) family. 01 (HNTX-16) subfamily. As to expression, expressed by the venom gland.

It is found in the secreted. Functionally, probable ion channel inhibitor. The protein is U11-theraphotoxin-Hhn1u of Cyriopagopus hainanus (Chinese bird spider).